The chain runs to 135 residues: Retinol-binding protein 1 (135 aa).

Residues 22–32 (RALDVNVALRK) are important for interaction with STRA6. The all-trans-retinol site is built by Lys41, Met63, and Gln109.

This sequence belongs to the calycin superfamily. Fatty-acid binding protein (FABP) family. In terms of assembly, interacts (only as retinol-free apoprotein) with STRA6.

The protein resides in the cytoplasm. Its subcellular location is the lipid droplet. Functionally, cytoplasmic retinol-binding protein. Accepts retinol from the transport protein STRA6, and thereby contributes to retinol uptake, storage and retinoid homeostasis. This Mus musculus (Mouse) protein is Retinol-binding protein 1 (Rbp1).